Consider the following 875-residue polypeptide: Alanine--tRNA ligase (875 aa).

Histidine 564, histidine 568, cysteine 666, and histidine 670 together coordinate Zn(2+).

This sequence belongs to the class-II aminoacyl-tRNA synthetase family. As to quaternary structure, homotetramer. The cofactor is Zn(2+).

The protein resides in the cytoplasm. The catalysed reaction is tRNA(Ala) + L-alanine + ATP = L-alanyl-tRNA(Ala) + AMP + diphosphate. In terms of biological role, catalyzes the attachment of alanine to tRNA(Ala) in a two-step reaction: alanine is first activated by ATP to form Ala-AMP and then transferred to the acceptor end of tRNA(Ala). Also edits incorrectly charged Ser-tRNA(Ala) and Gly-tRNA(Ala) via its editing domain. This chain is Alanine--tRNA ligase, found in Enterobacter sp. (strain 638).